The sequence spans 361 residues: MALLELRDVTRRFGDFTAVDCVNLSIEAGELFTLLGPSGCGKTTLLRMIAGFDVPDSGQILLDGQDIANTPPEKRPIHTVFQSYALFPHMTVADNVAFPLKMSGKTPAEIKKRVEKALEEVQLSRFTHRFPHELSGGQKQRVAFARGLINRPRLLLMDEPLGALDAKLREDMQRELISLQKEVGITFVFVTHSQDEALALSQRIAVMNQGQVEQIGEPSVIYSHPANRFIADFIGKINLMAARVTQVSDNDMTLEIDQLGTTTLPLKQGIKTGDQGVMAIRPEQVSVHALARHAELPHAHTGKVLDFLYVGDVTTYIVELDCGIRVEALLANSSPGRARFFEVGDPVIVSWTREAAQFLMN.

Positions 4–234 (LELRDVTRRF…PANRFIADFI (231 aa)) constitute an ABC transporter domain. An ATP-binding site is contributed by 36–43 (GPSGCGKT).

Belongs to the ABC transporter superfamily. Spermidine/putrescine importer (TC 3.A.1.11.1) family. In terms of assembly, the complex is composed of two ATP-binding proteins (PotA), two transmembrane proteins (PotB and PotC) and a solute-binding protein (PotD).

It localises to the cell inner membrane. It catalyses the reaction ATP + H2O + polyamine-[polyamine-binding protein]Side 1 = ADP + phosphate + polyamineSide 2 + [polyamine-binding protein]Side 1.. In terms of biological role, part of the ABC transporter complex PotABCD involved in spermidine/putrescine import. Responsible for energy coupling to the transport system. In Nitrosomonas europaea (strain ATCC 19718 / CIP 103999 / KCTC 2705 / NBRC 14298), this protein is Spermidine/putrescine import ATP-binding protein PotA.